The primary structure comprises 152 residues: Xanthine-guanine phosphoribosyltransferase (152 aa).

Residues 37–38 (RG) and 88–96 (DDLVDTGGT) each bind 5-phospho-alpha-D-ribose 1-diphosphate. Residue Asp-89 participates in Mg(2+) binding. Residues Asp-92 and Ile-135 each contribute to the guanine site. Asp-92 and Ile-135 together coordinate xanthine. GMP contacts are provided by residues 92 to 96 (DTGGT) and 134 to 135 (WI).

Belongs to the purine/pyrimidine phosphoribosyltransferase family. XGPT subfamily. In terms of assembly, homotetramer. The cofactor is Mg(2+).

It is found in the cell inner membrane. It catalyses the reaction GMP + diphosphate = guanine + 5-phospho-alpha-D-ribose 1-diphosphate. It carries out the reaction XMP + diphosphate = xanthine + 5-phospho-alpha-D-ribose 1-diphosphate. The enzyme catalyses IMP + diphosphate = hypoxanthine + 5-phospho-alpha-D-ribose 1-diphosphate. It participates in purine metabolism; GMP biosynthesis via salvage pathway; GMP from guanine: step 1/1. It functions in the pathway purine metabolism; XMP biosynthesis via salvage pathway; XMP from xanthine: step 1/1. In terms of biological role, purine salvage pathway enzyme that catalyzes the transfer of the ribosyl-5-phosphate group from 5-phospho-alpha-D-ribose 1-diphosphate (PRPP) to the N9 position of the 6-oxopurines guanine and xanthine to form the corresponding ribonucleotides GMP (guanosine 5'-monophosphate) and XMP (xanthosine 5'-monophosphate), with the release of PPi. To a lesser extent, also acts on hypoxanthine. This is Xanthine-guanine phosphoribosyltransferase from Yersinia enterocolitica serotype O:8 / biotype 1B (strain NCTC 13174 / 8081).